The primary structure comprises 547 residues: Alpha-humulene/(-)-(E)-beta-caryophyllene synthase (547 aa).

(2E,6E)-farnesyl diphosphate contacts are provided by Arg262, Asp299, Asp303, Arg442, and Asp445. The Mg(2+) site is built by Asp299 and Asp303. The short motif at 299–303 (DDMYD) is the DDXXD motif element. Mg(2+)-binding residues include Asp445, Asp446, Ser449, and Glu453.

Belongs to the terpene synthase family. Tpsa subfamily. In terms of assembly, monomer. It depends on Mg(2+) as a cofactor. Requires Mn(2+) as cofactor. In terms of tissue distribution, expressed exclusively in flowers. Expressed in the flower stigmata and also detected in the mesocarp cell layers of the silique wall.

It is found in the cytoplasm. It catalyses the reaction (2E,6E)-farnesyl diphosphate = (-)-(E)-beta-caryophyllene + diphosphate. It carries out the reaction (2E,6E)-farnesyl diphosphate = alpha-copaene + diphosphate. The enzyme catalyses (2E,6E)-farnesyl diphosphate = alpha-humulene + diphosphate. The catalysed reaction is (2E,6E)-farnesyl diphosphate = (1S,2S,4R)-beta-elemene + diphosphate. It functions in the pathway secondary metabolite biosynthesis; terpenoid biosynthesis. Involved in sesquiterpene (C15) biosynthesis. The major products are beta-caryophyllene and alpha-humulene. Does not convert geranyl diphosphate (GPP) to any monoterpenes. This Arabidopsis thaliana (Mouse-ear cress) protein is Alpha-humulene/(-)-(E)-beta-caryophyllene synthase.